A 433-amino-acid polypeptide reads, in one-letter code: Serine hydroxymethyltransferase (433 aa).

(6S)-5,6,7,8-tetrahydrofolate is bound by residues Leu-132 and 136-138; that span reads GHL. Lys-241 is subject to N6-(pyridoxal phosphate)lysine.

It belongs to the SHMT family. Homodimer. Requires pyridoxal 5'-phosphate as cofactor.

The protein localises to the cytoplasm. The catalysed reaction is (6R)-5,10-methylene-5,6,7,8-tetrahydrofolate + glycine + H2O = (6S)-5,6,7,8-tetrahydrofolate + L-serine. The protein operates within one-carbon metabolism; tetrahydrofolate interconversion. It functions in the pathway amino-acid biosynthesis; glycine biosynthesis; glycine from L-serine: step 1/1. Its function is as follows. Catalyzes the reversible interconversion of serine and glycine with tetrahydrofolate (THF) serving as the one-carbon carrier. This reaction serves as the major source of one-carbon groups required for the biosynthesis of purines, thymidylate, methionine, and other important biomolecules. Also exhibits THF-independent aldolase activity toward beta-hydroxyamino acids, producing glycine and aldehydes, via a retro-aldol mechanism. This is Serine hydroxymethyltransferase from Afipia carboxidovorans (strain ATCC 49405 / DSM 1227 / KCTC 32145 / OM5) (Oligotropha carboxidovorans).